The chain runs to 760 residues: GLC7-interacting protein 4 (760 aa).

2 disordered regions span residues 449-573 (KKKP…SLQS) and 593-626 (KSAS…SSST). Composition is skewed to low complexity over residues 454-474 (ITKL…ASPS) and 494-506 (SSRS…VRTT). Ser-497 and Ser-501 each carry phosphoserine. Basic and acidic residues predominate over residues 512–525 (AETKKSVVSPEKRK). The segment covering 534–554 (SSSLQSYTNKQQTSYLNSTRH) has biased composition (polar residues). 2 stretches are compositionally biased toward low complexity: residues 561-573 (SKLN…SLQS) and 594-626 (SAST…SSST). Residue Ser-609 is modified to Phosphoserine.

This sequence belongs to the GIP4 family. In terms of assembly, interacts with GLC7.

Its subcellular location is the cytoplasm. In terms of biological role, GLC7 phosphatase-regulatory protein involved in GLC7 subcellular redistribution and chromosome segregation. The polypeptide is GLC7-interacting protein 4 (GIP4) (Saccharomyces cerevisiae (strain ATCC 204508 / S288c) (Baker's yeast)).